The chain runs to 189 residues: Apolipoprotein D (189 aa).

A signal peptide spans 1-20 (MVMLLLLLSALAGLFGAAEG). Gln-21 carries the pyrrolidone carboxylic acid modification. Intrachain disulfides connect Cys-28-Cys-134 and Cys-61-Cys-185. N-linked (GlcNAc...) (complex) asparagine glycans are attached at residues Asn-65 and Asn-98.

Belongs to the calycin superfamily. Lipocalin family. Homodimer. In plasma, also exists as a disulfide-linked heterodimer with APOA2. In terms of processing, N-glycosylated. N-glycan heterogeneity at Asn-65: Hex5HexNAc4 (major) and Hex6HexNAc5 (minor); at Asn-98: Hex5HexNAc4 (minor), dHex1Hex5HexNAc4 (major), dHex1Hex6HexNAc5 (minor) and dHex1Hex7HexNAc6 (minor). Expressed in liver, intestine, pancreas, kidney, placenta, adrenal, spleen, fetal brain tissue and tears.

It is found in the secreted. In terms of biological role, APOD occurs in the macromolecular complex with lecithin-cholesterol acyltransferase. It is probably involved in the transport and binding of bilin. Appears to be able to transport a variety of ligands in a number of different contexts. In Homo sapiens (Human), this protein is Apolipoprotein D (APOD).